The chain runs to 342 residues: Ferredoxin--NADP reductase (342 aa).

FAD is bound by residues C17, D36, Q44, Y49, V89, F124, D289, and T330.

This sequence belongs to the ferredoxin--NADP reductase type 2 family. In terms of assembly, homodimer. The cofactor is FAD.

The catalysed reaction is 2 reduced [2Fe-2S]-[ferredoxin] + NADP(+) + H(+) = 2 oxidized [2Fe-2S]-[ferredoxin] + NADPH. In Bradyrhizobium diazoefficiens (strain JCM 10833 / BCRC 13528 / IAM 13628 / NBRC 14792 / USDA 110), this protein is Ferredoxin--NADP reductase.